A 293-amino-acid chain; its full sequence is Short-chain dehydrogenase/reductase PhomF' (293 aa).

Positions 31 and 102 each coordinate NADP(+). Catalysis depends on Ser-175, which acts as the Proton donor. Residues Tyr-190, Lys-194, and Ser-225 each coordinate NADP(+). The active-site Proton acceptor is Tyr-190. Lys-194 functions as the Lowers pKa of active site Tyr in the catalytic mechanism.

This sequence belongs to the short-chain dehydrogenases/reductases (SDR) family.

Its function is as follows. Short-chain dehydrogenase/reductase; part of the gene cluster that mediates the biosynthesis of the phomopsins, a group of hexapeptide mycotoxins which infects lupins and causes lupinosis disease in livestock. The role of phomF' within the phomopsins biosynthesis pathway has still to be determined. The pathway starts with the processing of the precursor phomA by several endopeptidases including kexin proteases as well as the cluster-specific S41 family peptidase phomP1 and the oligopeptidase phomG to produce 10 identical copies of the hexapeptide Tyr-Val-Ile-Pro-Ile-Asp. After being excised from the precursor peptide, the core peptides are cyclized and modified post-translationally by enzymes encoded within the gene cluster. The timing and order of proteolysis of the phomA precursor and PTMs are still unknown. Two tyrosinase-like enzymes, phomQ1 and phomQ2, catalyze the chlorination and hydroxylation of Tyr, respectively. PhomYb, is proposed to be involved in the construction of the macrocyclic structure. The other 4 ustYa family proteins may be involved in PTMs that generate the unique structure of phomopsin A. PhomYa is required for the hydroxylation of C-beta of Tyr. PhomYc, phomYd, and phomYe are responsible for the biosynthesis of 2,3-dehydroisoleucine (dIle), 2,3-dehydroaspartic acid (dAsp), and 3,4-dehydroproline (dPro), respectively. While dIle formation by phomYc is indispensable for the installation of dAsp by phomYd, the order of the other PTMs have not been elucidated yet. Most of the biosynthetic enzymes likely have broad substrate specificity, and thus, there might be a metabolic grid from a precursor to phomopsin A. The enzyme(s) responsible for the biosynthesis of 3,4-dehydrovaline (dVal) have also not been identified yet. Finally, phomM acts as an S-adenosylmethionine-dependent alpha-N-methyltransferase that catalyzes two successive N-methylation reactions, converting N-desmethyl-phomopsin A to phomopsin A and phomopsin A further to an N,N-dimethylated congener called phomopsin E. The chain is Short-chain dehydrogenase/reductase PhomF' from Diaporthe leptostromiformis (Lupinosis disease fungus).